Here is a 287-residue protein sequence, read N- to C-terminus: POU domain class 2-associating factor 2 (287 aa).

One can recognise an OCA domain in the interval 10–32 (KRVYQGVRVKHTVKDLLAEKRSR). Disordered regions lie at residues 24 to 51 (DLLAEKRSRQTSNTRLNGSVSSSQPPFI), 161 to 199 (TVPDGLSQPDPMPADALQSLPPSTSCLSQLESGSSTQHR), and 247 to 279 (PKVGPLSPEEGSDVSSLHDPSPWTKEDGSMAWG). Polar residues-rich tracts occupy residues 33–49 (QTSNTRLNGSVSSSQPP) and 180–199 (LPPSTSCLSQLESGSSTQHR).

Belongs to the POU2AF family. Interacts with POU2F3 (via the POU domain) in a DNA-dependent manner; this interaction recruits POU2AF2 to chromatin and increases POU2F3 transactivation activity. In terms of tissue distribution, expressed in tuft cells of the small intestine, trachea, thymus, and colon.

It localises to the cytoplasm. It is found in the cytosol. Its subcellular location is the nucleus. Transcriptional coactivator of POU2F3. This complex drives the development of tuft cells, a rare chemosensory cells that coordinate immune and neural functions within mucosal epithelial tissues. The protein is POU domain class 2-associating factor 2 of Mus musculus (Mouse).